The sequence spans 480 residues: tRNA-2-methylthio-N(6)-dimethylallyladenosine synthase (480 aa).

The MTTase N-terminal domain occupies 31–151 (RGLHVITWGC…LPEMVARAAR (121 aa)). Residues cysteine 40, cysteine 76, cysteine 114, cysteine 192, cysteine 196, and cysteine 199 each contribute to the [4Fe-4S] cluster site. In terms of domain architecture, Radical SAM core spans 178–410 (SPGGITSFLT…QALLRTQQDA (233 aa)). One can recognise a TRAM domain in the interval 413–475 (DGTVGHVVPV…TNSLSGTLVQ (63 aa)).

It belongs to the methylthiotransferase family. MiaB subfamily. As to quaternary structure, monomer. The cofactor is [4Fe-4S] cluster.

The protein localises to the cytoplasm. It carries out the reaction N(6)-dimethylallyladenosine(37) in tRNA + (sulfur carrier)-SH + AH2 + 2 S-adenosyl-L-methionine = 2-methylsulfanyl-N(6)-dimethylallyladenosine(37) in tRNA + (sulfur carrier)-H + 5'-deoxyadenosine + L-methionine + A + S-adenosyl-L-homocysteine + 2 H(+). In terms of biological role, catalyzes the methylthiolation of N6-(dimethylallyl)adenosine (i(6)A), leading to the formation of 2-methylthio-N6-(dimethylallyl)adenosine (ms(2)i(6)A) at position 37 in tRNAs that read codons beginning with uridine. The polypeptide is tRNA-2-methylthio-N(6)-dimethylallyladenosine synthase (Gluconacetobacter diazotrophicus (strain ATCC 49037 / DSM 5601 / CCUG 37298 / CIP 103539 / LMG 7603 / PAl5)).